A 146-amino-acid polypeptide reads, in one-letter code: Catabolic 3-dehydroquinase (146 aa).

Catalysis depends on Tyr-24, which acts as the Proton acceptor. Residues Asn-78, His-84, and Asp-91 each coordinate substrate. Residue His-104 is the Proton donor of the active site. Residues 105–106 (IT) and Arg-115 each bind substrate.

Belongs to the type-II 3-dehydroquinase family. In terms of assembly, homododecamer. Adopts a ring-like structure, composed of an arrangement of two hexameric rings stacked on top of one another.

It carries out the reaction 3-dehydroquinate = 3-dehydroshikimate + H2O. It participates in aromatic compound metabolism; 3,4-dihydroxybenzoate biosynthesis; 3,4-dihydroxybenzoate from 3-dehydroquinate: step 1/2. Is involved in the catabolism of quinate. Allows the utilization of quinate as carbon source via the beta-ketoadipate pathway. The chain is Catabolic 3-dehydroquinase from Candida tropicalis (strain ATCC MYA-3404 / T1) (Yeast).